A 317-amino-acid chain; its full sequence is MKKISLTLLILLLALTAAACGSKNESTASKASGTASEKKKIEYLDKTYEVTVPTDKIAITGSVESMEDAKLLDVHPQGAISFSGKFPDMFKDITDKAEPTGEKMEPNIEKILEMKPDVILASTKFPEKTLQKISTAGTTIPVSHISSNWKENMMLLAQLTGKEKKAKKIIADYEQDLKEIKTKINDKAKDSKALVIRIRQGNIYIYPEQVYFNSTLYGDLGLKAPNEVKAAKAQELSSLEKLSEMNPDHIFVQFSDDENADKPDALKDLEKNPIWKSLKAVKEDHVYVNSVDPLAQGGTAWSKVRFLKAAAEKLTQN.

The first 19 residues, 1–19, serve as a signal peptide directing secretion; it reads MKKISLTLLILLLALTAAA. The N-palmitoyl cysteine moiety is linked to residue C20. Residue C20 is the site of S-diacylglycerol cysteine attachment. A Fe/B12 periplasmic-binding domain is found at 57–317; the sequence is IAITGSVESM…KAAAEKLTQN (261 aa).

This sequence belongs to the bacterial solute-binding protein 8 family. As to quaternary structure, the complex is composed of one ATP-binding protein (YusV), two transmembrane proteins (FeuB and FeuC) and a solute-binding protein (FeuA).

It is found in the cell membrane. The protein resides in the cytoplasm. Its subcellular location is the membrane raft. In terms of biological role, involved in the uptake of iron. Functionally, part of the ABC transporter complex FeuABC/YusV involved in import of the catecholate siderophores bacillibactin and enterobactin. The sequence is that of Iron-uptake system-binding protein (feuA) from Bacillus subtilis (strain 168).